A 130-amino-acid polypeptide reads, in one-letter code: Small ribosomal subunit protein uS9 (130 aa).

The segment at Thr-105–Arg-130 is disordered. Over residues Lys-111–Arg-130 the composition is skewed to basic residues.

Belongs to the universal ribosomal protein uS9 family.

In Syntrophomonas wolfei subsp. wolfei (strain DSM 2245B / Goettingen), this protein is Small ribosomal subunit protein uS9.